The chain runs to 329 residues: MKSALFSRFFILLPWILIVIIMLDVDTRRPAPPLTPRPYFSPYAVGRGGARLPPRRGGPDSGPGRGWEKRNESRPHARPRPEPPLPTIYAITPTYSRPVQKAELTRLANTFRQVAQLHWILVEDAAARSELVSRFLARAGLPSTHLHVPTPRRYKRPGLPRATEQRNAGLAWLRQRHQHQRAQPGVLFFADDDNTYSLELFQEMRTTRKVSVWPVGLVGGRRYERPLVENGKVVGWYTGWRADRPFAIDMAGFAVSLQVILSNPKAVFKRRGSQPGMQESDFLKQITTVEELEPKANNCTKVLVWHTRTEKVNLANEPKYRLDTVKIEV.

Residues Met1–Lys2 lie on the Cytoplasmic side of the membrane. Residues Ser3–Leu23 traverse the membrane as a helical; Signal-anchor for type II membrane protein segment. At Asp24–Val329 the chain is on the lumenal side. Residues Val45–Thr87 form a disordered region. Positions Gly66 to Pro81 are enriched in basic and acidic residues. A glycan (N-linked (GlcNAc...) asparagine) is linked at Asn71. UDP-alpha-D-glucuronate is bound by residues Pro93–Tyr95, Asp124, Arg161, Arg166, and Asp191–Asp193. Asp193 provides a ligand contact to Mn(2+). An interaction with galactose moiety of substrate glycoprotein region spans residues Trp240–Asp249. Glu279 serves as the catalytic Proton donor/acceptor. An N-linked (GlcNAc...) asparagine glycan is attached at Asn298. Residue His306–Arg308 participates in UDP-alpha-D-glucuronate binding.

Belongs to the glycosyltransferase 43 family. Homodimer. It depends on Mn(2+) as a cofactor.

Its subcellular location is the golgi apparatus membrane. It carries out the reaction 3-O-(beta-D-galactosyl-(1-&gt;3)-beta-D-galactosyl-(1-&gt;4)-beta-D-xylosyl)-L-seryl-[protein] + UDP-alpha-D-glucuronate = 3-O-(beta-D-GlcA-(1-&gt;3)-beta-D-Gal-(1-&gt;3)-beta-D-Gal-(1-&gt;4)-beta-D-Xyl)-L-seryl-[protein] + UDP + H(+). It participates in protein modification; protein glycosylation. In terms of biological role, involved in the biosynthesis of L2/HNK-1 carbohydrate epitope on both glycolipids and glycoproteins. The polypeptide is Galactosylgalactosylxylosylprotein 3-beta-glucuronosyltransferase 2 (B3GAT2) (Canis lupus familiaris (Dog)).